The primary structure comprises 210 residues: Calcium-activated potassium channel subunit beta-4 (210 aa).

The Cytoplasmic portion of the chain corresponds to 1–19; it reads MAKLRVAYEYTEAEDKSIR. Residues 20–40 traverse the membrane as a helical segment; that stretch reads LGLFLIISGVVSLFIFGFCWL. Residues 41–167 lie on the Extracellular side of the membrane; sequence SPALQDLQAT…DVLLHRTHDE (127 aa). 2 N-linked (GlcNAc...) asparagine glycosylation sites follow: N53 and N90. Residues 168–188 traverse the membrane as a helical segment; sequence IVLLHCFLWPLVTFVVGVLIV. The Cytoplasmic segment spans residues 189 to 210; it reads VLTICAKSLAVKAEAMKKRKFS.

This sequence belongs to the KCNMB (TC 8.A.14.1) family. KCNMB4 subfamily. In terms of assembly, interacts with KCNMA1 tetramer. There are probably 4 molecules of KCMNB4 per KCNMA1 tetramer. Interacts with FMR1 (via N-terminus). In terms of processing, phosphorylated. Phosphorylation modulates its effect on KCNMA1 activation kinetics. N-glycosylated. A highly glycosylated form is promoted by KCNMA1. Glycosylation, which is not required for the interaction with KCNMA1 and subcellular location, increases protection against charybdotoxin. In terms of tissue distribution, predominantly expressed in brain. In brain, it is expressed in the cerebellum, cerebral cortex, medulla, spinal cord, occipital pole, frontal lobe, temporal lobe, putamen, amygdala, caudate nucleus, corpus callosum, hippocampus, substantia nigra and thalamus. Weakly or not expressed in other tissues.

It localises to the membrane. In terms of biological role, regulatory subunit of the calcium activated potassium KCNMA1 (maxiK) channel. Modulates the calcium sensitivity and gating kinetics of KCNMA1, thereby contributing to KCNMA1 channel diversity. Decreases the gating kinetics and calcium sensitivity of the KCNMA1 channel, but with fast deactivation kinetics. May decrease KCNMA1 channel openings at low calcium concentrations but increases channel openings at high calcium concentrations. Makes KCNMA1 channel resistant to 100 nM charybdotoxin (CTX) toxin concentrations. This chain is Calcium-activated potassium channel subunit beta-4 (KCNMB4), found in Homo sapiens (Human).